The following is a 139-amino-acid chain: Transthyretin-like protein 5 (139 aa).

A signal peptide spans 1-15 (MKLIILLCLVASSYA).

The protein belongs to the nematode transthyretin-like family.

It is found in the secreted. This Caenorhabditis elegans protein is Transthyretin-like protein 5 (ttr-5).